A 373-amino-acid polypeptide reads, in one-letter code: MLDIFRGLKSLVKISHVNTDSPVFRLHYSITVIILMSFSLIVTTRQYVGNPIDCVHTKDIPADVLNTYCWIHSTFALKSLFLKEVGKDVPYPGVGNSAEATAADKKIYKYYQWVCFCLFFQAILFYTPRWLWKSWEGGKIHALMMDLDIGICSEIEKKQKKKLLLDYLWDNLRYHNWWAYRYYVCEFLSLCNVIGQMFLMNRFFDGEFMTFGLDVITHMEADQEDRMDPMIYIFPRMTKCTFYKYGVSGEVERHDAICILPLNVVNEKIYIFLWFWFIILTILTTLTIFYRIIIIFSPRMRVYLLRLRFRLVRRDAIEIIVRRSKMGDWFLLYRLGENLDSIIFRDVMQDLANRLHNNQHHRVPGMKGEIQDA.

Residues 1–21 (MLDIFRGLKSLVKISHVNTDS) are Cytoplasmic-facing. Residues 22–42 (PVFRLHYSITVIILMSFSLIV) form a helical membrane-spanning segment. Residues 43-106 (TTRQYVGNPI…SAEATAADKK (64 aa)) lie on the Extracellular side of the membrane. A helical transmembrane segment spans residues 107 to 127 (IYKYYQWVCFCLFFQAILFYT). Topologically, residues 128–176 (PRWLWKSWEGGKIHALMMDLDIGICSEIEKKQKKKLLLDYLWDNLRYHN) are cytoplasmic. Residues 177–199 (WWAYRYYVCEFLSLCNVIGQMFL) traverse the membrane as a helical segment. Over 200-268 (MNRFFDGEFM…ILPLNVVNEK (69 aa)) the chain is Extracellular. A helical membrane pass occupies residues 269-289 (IYIFLWFWFIILTILTTLTIF). The Cytoplasmic segment spans residues 290 to 373 (YRIIIIFSPR…PGMKGEIQDA (84 aa)).

It belongs to the pannexin family. In terms of assembly, monomer.

It is found in the cell membrane. The protein resides in the cell junction. It localises to the gap junction. Its function is as follows. Structural component of the gap junctions at electrical synapses in distal and mid-depth levels in the lamina. This is Innexin shaking-B from Anopheles gambiae (African malaria mosquito).